Here is a 149-residue protein sequence, read N- to C-terminus: D-aminoacyl-tRNA deacylase (149 aa).

Residues 137–138 (GP) carry the Gly-cisPro motif, important for rejection of L-amino acids motif.

Belongs to the DTD family. As to quaternary structure, homodimer.

Its subcellular location is the cytoplasm. The catalysed reaction is glycyl-tRNA(Ala) + H2O = tRNA(Ala) + glycine + H(+). It catalyses the reaction a D-aminoacyl-tRNA + H2O = a tRNA + a D-alpha-amino acid + H(+). Its function is as follows. An aminoacyl-tRNA editing enzyme that deacylates mischarged D-aminoacyl-tRNAs. Also deacylates mischarged glycyl-tRNA(Ala), protecting cells against glycine mischarging by AlaRS. Acts via tRNA-based rather than protein-based catalysis; rejects L-amino acids rather than detecting D-amino acids in the active site. By recycling D-aminoacyl-tRNA to D-amino acids and free tRNA molecules, this enzyme counteracts the toxicity associated with the formation of D-aminoacyl-tRNA entities in vivo and helps enforce protein L-homochirality. In Clostridium perfringens (strain ATCC 13124 / DSM 756 / JCM 1290 / NCIMB 6125 / NCTC 8237 / Type A), this protein is D-aminoacyl-tRNA deacylase.